The primary structure comprises 127 residues: Glycine cleavage system H protein 2 (127 aa).

The 82-residue stretch at 24 to 105 folds into the Lipoyl-binding domain; that stretch reads SVTVGISDHA…PYGSWIFKLK (82 aa). At Lys65 the chain carries N6-lipoyllysine.

The protein belongs to the GcvH family. In terms of assembly, the glycine cleavage system is composed of four proteins: P, T, L and H. Requires (R)-lipoate as cofactor.

Functionally, the glycine cleavage system catalyzes the degradation of glycine. The H protein shuttles the methylamine group of glycine from the P protein to the T protein. This chain is Glycine cleavage system H protein 2, found in Pseudomonas putida (strain ATCC 47054 / DSM 6125 / CFBP 8728 / NCIMB 11950 / KT2440).